We begin with the raw amino-acid sequence, 554 residues long: Glucose-6-phosphate isomerase (554 aa).

The Proton donor role is filled by glutamate 359. Active-site residues include histidine 390 and lysine 518.

The protein belongs to the GPI family.

The protein resides in the cytoplasm. It catalyses the reaction alpha-D-glucose 6-phosphate = beta-D-fructose 6-phosphate. It functions in the pathway carbohydrate biosynthesis; gluconeogenesis. It participates in carbohydrate degradation; glycolysis; D-glyceraldehyde 3-phosphate and glycerone phosphate from D-glucose: step 2/4. Its function is as follows. Catalyzes the reversible isomerization of glucose-6-phosphate to fructose-6-phosphate. The protein is Glucose-6-phosphate isomerase of Pseudomonas aeruginosa (strain LESB58).